The following is a 482-amino-acid chain: Anaerobic nitric oxide reductase flavorubredoxin (482 aa).

The zinc metallo-hydrolase stretch occupies residues 30–210 (LRGSSYNSYL…PFSRLVTPKI (181 aa)). Fe cation is bound by residues His-79, Glu-81, Asp-83, His-147, Asp-166, and His-227. The 140-residue stretch at 254 to 393 (ITIFYDTMSN…LCRQHGRDIA (140 aa)) folds into the Flavodoxin-like domain. FMN-binding positions include 260 to 264 (TMSNN) and 342 to 369 (AFGS…EMSL). Positions 426 to 477 (GPMMQCSVCQWVYDPAKGEPNQDVQPGTPWSEVPDNFLCPECSLGKDVFDVL) constitute a Rubredoxin-like domain. Fe cation contacts are provided by Cys-431, Cys-434, Cys-464, and Cys-467.

This sequence in the N-terminal section; belongs to the zinc metallo-hydrolase group 3 family. In terms of assembly, homotetramer. Fe cation is required as a cofactor. Requires FMN as cofactor.

It is found in the cytoplasm. It participates in nitrogen metabolism; nitric oxide reduction. Its function is as follows. Anaerobic nitric oxide reductase; uses NADH to detoxify nitric oxide (NO), protecting several 4Fe-4S NO-sensitive enzymes. Has at least 2 reductase partners, only one of which (NorW, flavorubredoxin reductase) has been identified. NO probably binds to the di-iron center; electrons enter from the NorW at rubredoxin and are transferred sequentially to the FMN center and the di-iron center. Also able to function as an aerobic oxygen reductase. This is Anaerobic nitric oxide reductase flavorubredoxin from Klebsiella pneumoniae subsp. pneumoniae (strain ATCC 700721 / MGH 78578).